Consider the following 276-residue polypeptide: Large ribosomal subunit protein uL2 (276 aa).

Disordered stretches follow at residues 29-55 (PEKSLTTYKHSRQGRNNRGVITSRHRG) and 219-276 (HVRG…RRTR). Positions 259-276 (TRNKKKQSSKLIVRRRTR) are enriched in basic residues.

The protein belongs to the universal ribosomal protein uL2 family. Part of the 50S ribosomal subunit. Forms a bridge to the 30S subunit in the 70S ribosome.

Functionally, one of the primary rRNA binding proteins. Required for association of the 30S and 50S subunits to form the 70S ribosome, for tRNA binding and peptide bond formation. It has been suggested to have peptidyltransferase activity; this is somewhat controversial. Makes several contacts with the 16S rRNA in the 70S ribosome. The protein is Large ribosomal subunit protein uL2 of Rippkaea orientalis (strain PCC 8801 / RF-1) (Cyanothece sp. (strain PCC 8801)).